Consider the following 508-residue polypeptide: Maturase K (508 aa).

Belongs to the intron maturase 2 family. MatK subfamily.

The protein localises to the plastid. Its subcellular location is the chloroplast. In terms of biological role, usually encoded in the trnK tRNA gene intron. Probably assists in splicing its own and other chloroplast group II introns. The sequence is that of Maturase K from Ranunculus trichophyllus (Whitewater crowfoot).